Consider the following 229-residue polypeptide: Large ribosomal subunit protein uL1 (229 aa).

Belongs to the universal ribosomal protein uL1 family. Part of the 50S ribosomal subunit.

Functionally, binds directly to 23S rRNA. The L1 stalk is quite mobile in the ribosome, and is involved in E site tRNA release. Its function is as follows. Protein L1 is also a translational repressor protein, it controls the translation of the L11 operon by binding to its mRNA. This Clostridium acetobutylicum (strain ATCC 824 / DSM 792 / JCM 1419 / IAM 19013 / LMG 5710 / NBRC 13948 / NRRL B-527 / VKM B-1787 / 2291 / W) protein is Large ribosomal subunit protein uL1.